Reading from the N-terminus, the 509-residue chain is MTIQKINRVLLSVYDKTGLITLAQELKDMGVELVSTGGTLRHLQTHGIPVYSVEEVTGFPEILSGRVKTLHPKIHGGILAKNRENEELSSLDIKTFDLVIVNLYPFEQVMQKAEATEEEVMENIDIGGPTMIRAAAKNWYRVGVCVDPTDYEVLTQQLKQYHGLTDEFRKTLARKAFKHTAQYDKAIFNYFESVDTNKDDETELKFPEFNLLESRELPYGENPHQKASLLMESQKFIQHQGKGLSYNNFQDIDAAIKLVHEFQKPAVVAVKHTNPCGVGVSNTIEEAYDKAYQGDPVSIFGGIVACNRPVTEELASKLTEIFLDVIIAPEFEPRALEKLKSKSGTKVVEMDLEKMVGNKVEIKSTTFGYLCQEADYHHPHPQNWDRVAGEQAKPEEIDDLIIAEKIVKHVKSNAIVVVKEGQSLGIGAGQMNRVGASRIALENAGKESQNSVLASDAFFPFNDVVKLCSQYGVSAIVQPGGSKRDQDSIDLAQETGITMYFTGIRHFKH.

The MGS-like domain maps to 1–146 (MTIQKINRVL…KNWYRVGVCV (146 aa)).

The protein belongs to the PurH family.

The enzyme catalyses (6R)-10-formyltetrahydrofolate + 5-amino-1-(5-phospho-beta-D-ribosyl)imidazole-4-carboxamide = 5-formamido-1-(5-phospho-D-ribosyl)imidazole-4-carboxamide + (6S)-5,6,7,8-tetrahydrofolate. It catalyses the reaction IMP + H2O = 5-formamido-1-(5-phospho-D-ribosyl)imidazole-4-carboxamide. It functions in the pathway purine metabolism; IMP biosynthesis via de novo pathway; 5-formamido-1-(5-phospho-D-ribosyl)imidazole-4-carboxamide from 5-amino-1-(5-phospho-D-ribosyl)imidazole-4-carboxamide (10-formyl THF route): step 1/1. Its pathway is purine metabolism; IMP biosynthesis via de novo pathway; IMP from 5-formamido-1-(5-phospho-D-ribosyl)imidazole-4-carboxamide: step 1/1. This chain is Bifunctional purine biosynthesis protein PurH, found in Natranaerobius thermophilus (strain ATCC BAA-1301 / DSM 18059 / JW/NM-WN-LF).